Here is a 467-residue protein sequence, read N- to C-terminus: MTTTLWPQVLKQLEAVLNDQQFLTWIRPLEAVEEDNTLRLIAPSGFILDWVNKKLLSQIKQAVYLVAPVNTPEVTLEVGEYAIESFNEPENTSVPQPLRETKAEREAAEKAASSTSKKKSDSPPKKTIKHNLNTNFTFDTFVEGKANQLAAAAARQVADNPGGSYNPFFIYGGVGLGKTHLMHAIGNELMRRDPNARVVYLHSERFVADMVNALRHNKIDEFKRFYRSLDALLIDDIQFFAKKEQSQEEFFHTFNTLLEGNKQVILTSDRFPKEVDGLEDRLKSRFGWGLTIAVEPPEFEMRVAILMKKAAEFGFLLPDEVAFFIAKRLRGNVRDLEGALKRVGAFAQFTQQLVTVDLAKDALKDLLALQQKMVTLENIQKTVADYYKIRVADLLSKRRTRNIARPRQMSMAISKELTSHSLPEIGDAFGGRDHTTVLHAVRKINELKETDHRIEEDFNSLIRIITN.

A domain I, interacts with DnaA modulators region spans residues 1-85; the sequence is MTTTLWPQVL…LEVGEYAIES (85 aa). The segment at 85-130 is domain II; sequence SFNEPENTSVPQPLRETKAEREAAEKAASSTSKKKSDSPPKKTIKH. A disordered region spans residues 87–129; the sequence is NEPENTSVPQPLRETKAEREAAEKAASSTSKKKSDSPPKKTIK. A compositionally biased stretch (basic and acidic residues) spans 99 to 109; the sequence is RETKAEREAAE. The segment at 131 to 347 is domain III, AAA+ region; sequence NLNTNFTFDT…GALKRVGAFA (217 aa). Positions 175, 177, 178, and 179 each coordinate ATP. The interval 348-467 is domain IV, binds dsDNA; it reads QFTQQLVTVD…FNSLIRIITN (120 aa).

The protein belongs to the DnaA family. As to quaternary structure, oligomerizes as a right-handed, spiral filament on DNA at oriC.

It localises to the cytoplasm. Its function is as follows. Plays an essential role in the initiation and regulation of chromosomal replication. ATP-DnaA binds to the origin of replication (oriC) to initiate formation of the DNA replication initiation complex once per cell cycle. Binds the DnaA box (a 9 base pair repeat at the origin) and separates the double-stranded (ds)DNA. Forms a right-handed helical filament on oriC DNA; dsDNA binds to the exterior of the filament while single-stranded (ss)DNA is stabiized in the filament's interior. The ATP-DnaA-oriC complex binds and stabilizes one strand of the AT-rich DNA unwinding element (DUE), permitting loading of DNA polymerase. After initiation quickly degrades to an ADP-DnaA complex that is not apt for DNA replication. Binds acidic phospholipids. The protein is Chromosomal replication initiator protein DnaA of Hydrogenovibrio crunogenus (strain DSM 25203 / XCL-2) (Thiomicrospira crunogena).